We begin with the raw amino-acid sequence, 245 residues long: tRNA pseudouridine synthase A 2 (245 aa).

Catalysis depends on Asp-53, which acts as the Nucleophile. A substrate-binding site is contributed by Tyr-111.

This sequence belongs to the tRNA pseudouridine synthase TruA family. As to quaternary structure, homodimer.

It catalyses the reaction uridine(38/39/40) in tRNA = pseudouridine(38/39/40) in tRNA. Its function is as follows. Formation of pseudouridine at positions 38, 39 and 40 in the anticodon stem and loop of transfer RNAs. In Bacillus anthracis, this protein is tRNA pseudouridine synthase A 2.